Consider the following 218-residue polypeptide: Probable transaldolase (218 aa).

K87 acts as the Schiff-base intermediate with substrate in catalysis.

The protein belongs to the transaldolase family. Type 3B subfamily.

The protein localises to the cytoplasm. It catalyses the reaction D-sedoheptulose 7-phosphate + D-glyceraldehyde 3-phosphate = D-erythrose 4-phosphate + beta-D-fructose 6-phosphate. It participates in carbohydrate degradation; pentose phosphate pathway; D-glyceraldehyde 3-phosphate and beta-D-fructose 6-phosphate from D-ribose 5-phosphate and D-xylulose 5-phosphate (non-oxidative stage): step 2/3. Functionally, transaldolase is important for the balance of metabolites in the pentose-phosphate pathway. The polypeptide is Probable transaldolase (Bacteroides fragilis (strain YCH46)).